Here is a 240-residue protein sequence, read N- to C-terminus: Transcriptional activator protein VanR (240 aa).

Residues D169–G234 enclose the HTH luxR-type domain. The segment at residues A193–S212 is a DNA-binding region (H-T-H motif).

Belongs to the autoinducer-regulated transcriptional regulatory protein family.

Functionally, probable transcriptional activator. Binds to autoinducer molecule ODHL. The polypeptide is Transcriptional activator protein VanR (vanR) (Vibrio anguillarum (Listonella anguillarum)).